Here is a 303-residue protein sequence, read N- to C-terminus: Quinolinate synthase (303 aa).

Iminosuccinate-binding residues include H24 and S41. C86 contacts [4Fe-4S] cluster. Residues 112–114 (YIN) and S129 contribute to the iminosuccinate site. C172 provides a ligand contact to [4Fe-4S] cluster. Residues 198-200 (HPE) and T215 each bind iminosuccinate. Position 260 (C260) interacts with [4Fe-4S] cluster.

It belongs to the quinolinate synthase family. Type 2 subfamily. The cofactor is [4Fe-4S] cluster.

The protein localises to the cytoplasm. It carries out the reaction iminosuccinate + dihydroxyacetone phosphate = quinolinate + phosphate + 2 H2O + H(+). It participates in cofactor biosynthesis; NAD(+) biosynthesis; quinolinate from iminoaspartate: step 1/1. Functionally, catalyzes the condensation of iminoaspartate with dihydroxyacetone phosphate to form quinolinate. In Caldicellulosiruptor bescii (strain ATCC BAA-1888 / DSM 6725 / KCTC 15123 / Z-1320) (Anaerocellum thermophilum), this protein is Quinolinate synthase.